A 660-amino-acid polypeptide reads, in one-letter code: MSSSNEQICLDEDWIQKFGDREIEFVDEAQKSEVDETEKSIKRFPLSVLQRKGLALINLRIGVVKTGFGGKTIIDFEKDPAFSNGEELPANSFSPGDVVSIRQDFQSSKKKRPNETDISVEGVVTRVHERHISVALKSEEDIPSSVTRLSVVKLVNRVTYERMRHTMLEFKRSIPEYRNSLFYTLIGRKKADVSIDQKLIGDIKYFNKELNASQKKAVKFSIAVKELSLIHGPPGTGKTHTLVEIIQQLVLRNKRILVCGASNLAVDNIVDRLSSSGIPMVRLGHPARLLPSILDHSLDVLSRTGDNGDVIRGISEDIDVCLSKITKTKNGRERREIYKNIRELRKDYRKYEAKTVANIVSASKVVFCTLHGAGSRQLKGQRFDAVIIDEASQALEPQCWIPLLGMNKVILAGDHMQLSPNVQSKRPYISMFERLVKSQGDLVKCFLNIQYRMHELISKFPSDTFYDSKLVPAEEVKKRLLMDLENVEETELTDSPIYFYDTLGNYQEDDRSEDMQNFYQDSKSNHWEAQIVSYHISGLLEAGLEAKDIAVVTPYNAQVALIRQLLKEKGIEVEMGSVDKVQGREKEAIIFSLVRSNDVREVGFLAEKRRLNVAITRPKRHLCVIGDSNTVKWASEFFHQWVDFLEENAIVMDIDATMFE.

232–239 contributes to the ATP binding site; it reads GPPGTGKT.

This sequence belongs to the DNA2/NAM7 helicase family. Associates with the hexameric DNA polymerase alpha.

The protein localises to the cytoplasm. Its subcellular location is the nucleus. It catalyses the reaction ATP + H2O = ADP + phosphate + H(+). Functionally, DNA polymerase alpha-associated DNA helicase which may be involved in DNA replication. The protein is DNA polymerase alpha-associated DNA helicase A (hcs1) of Schizosaccharomyces pombe (strain 972 / ATCC 24843) (Fission yeast).